The sequence spans 366 residues: 4-hydroxy-3-methylbut-2-en-1-yl diphosphate synthase (flavodoxin) (366 aa).

Residues Cys270, Cys273, Cys305, and Glu312 each coordinate [4Fe-4S] cluster.

The protein belongs to the IspG family. [4Fe-4S] cluster is required as a cofactor.

It catalyses the reaction (2E)-4-hydroxy-3-methylbut-2-enyl diphosphate + oxidized [flavodoxin] + H2O + 2 H(+) = 2-C-methyl-D-erythritol 2,4-cyclic diphosphate + reduced [flavodoxin]. It functions in the pathway isoprenoid biosynthesis; isopentenyl diphosphate biosynthesis via DXP pathway; isopentenyl diphosphate from 1-deoxy-D-xylulose 5-phosphate: step 5/6. In terms of biological role, converts 2C-methyl-D-erythritol 2,4-cyclodiphosphate (ME-2,4cPP) into 1-hydroxy-2-methyl-2-(E)-butenyl 4-diphosphate. In Wigglesworthia glossinidia brevipalpis, this protein is 4-hydroxy-3-methylbut-2-en-1-yl diphosphate synthase (flavodoxin).